Consider the following 244-residue polypeptide: uncharacterized protein (244 aa).

The next 6 helical transmembrane spans lie at 5–27 (KFAL…LLAV), 37–59 (IVMV…SRFL), 87–106 (LVFI…FYYG), 116–138 (LSLF…FFVA), 159–181 (FWIW…VQPS), and 196–218 (GVFN…RMVA).

It is found in the cell membrane. This is an uncharacterized protein from Archaeoglobus fulgidus (strain ATCC 49558 / DSM 4304 / JCM 9628 / NBRC 100126 / VC-16).